Consider the following 61-residue polypeptide: Large ribosomal subunit protein uL30 (61 aa).

The protein belongs to the universal ribosomal protein uL30 family. As to quaternary structure, part of the 50S ribosomal subunit.

The polypeptide is Large ribosomal subunit protein uL30 (Thermosipho africanus (strain TCF52B)).